Here is a 394-residue protein sequence, read N- to C-terminus: MSGEDEQQEQTIAEDLVVTKYKMGGDIANRVLRSLVEASSSGVSVLSLCEKGDAMIMEETGKIFKKEKEMKKGIAFPTSISVNNCVCHFSPLKSDQDYILKEGDLVKIDLGVHVDGFIANVAHTFVIGVAQGTQVTGRKADVIKAAHLCAEAALRLVKPGNQNTQVTEAWNKVAHSFNCTPIEGMLSHQLKQHVIDGEKTIIQNPTDQQKKDHEKAEFEVHEVYAVDVLVSSGEGKAKDAGQRTTIYKRDPSKQYGLKMKTSRAFFSEVERRFDAMPFTLRAFEDEKKARMGVVECAKHELLQPFNVLYEKEGEFVAQFKFTVLLMPNGPMRITSGPFEPDLYKSEMEVQDAELKALLQSSASRKTQKKKKKKASKTVENATSGETLEENGAGD.

An N-acetylserine modification is found at Ser-2. Position 2 is a phosphoserine (Ser-2). The interval 2-48 (SGEDEQQEQTIAEDLVVTKYKMGGDIANRVLRSLVEASSSGVSVLSL) is necessary for nucleolar localization. Positions 46–54 (LSLCEKGDA) are RNA-binding. Residue Lys-298 forms a Glycyl lysine isopeptide (Lys-Gly) (interchain with G-Cter in SUMO2) linkage. Residues 301 to 394 (LLQPFNVLYE…ETLEENGAGD (94 aa)) form a necessary for nucleolar localization region. Residue Ser-335 is modified to Phosphoserine. The tract at residues 358–394 (LQSSASRKTQKKKKKKASKTVENATSGETLEENGAGD) is disordered. Phosphoserine; by PKC/PRKCD is present on Ser-361. Positions 361–375 (SASRKTQKKKKKKAS) are interaction with RNA. Residues 365–375 (KTQKKKKKKAS) are compositionally biased toward basic residues. 2 positions are modified to phosphothreonine: Thr-366 and Thr-386.

This sequence belongs to the peptidase M24 family. Isoform 2 interacts with the cytoplasmic domain of non-phosphorylated ERBB3; the interaction requires PKC activity. Interacts with AR. Treatment with HRG leads to dissociation from ERBB3 and increases association with AR. Interacts with nucleolin/NCL. Component of a ribonucleoprotein complex containing at least PA2G4, NCL, TOP1, PABPC2, RPLP0, acetylated histone H1 (HIST1H1A or H1F1), histone H1 2/4, RPL4, RPL8, RPL15, RPL18, RPL18A, RPL21, RPL11, RPL12, RPL28, RPL27, RPLP2 and RPL24. Interacts with HDAC2. Interacts with RB1; the interaction is enhanced upon PA2G4 dephosphorylation. Interacts with AKT1. Isoform 1 and isoform 2 interact with RNF20. Isoform 2 interacts with HUWE1. Interacts with DNAJC21. Post-translationally, phosphorylated on serine and threonine residues. Phosphorylation is enhanced by HRG treatment. Basal phosphorylation is PKC-dependent and HRG-induced phosphorylation is predominantly PKC-independent. Phosphorylation at Ser-361 by PKC/PRKCD regulates its nucleolar localization. Isoform 2 is polyubiquitinated, leading to proteasomal degradation and phosphorylation by PKC/PRKCD enhances polyubiquitination. In terms of tissue distribution, widely expressed.

Its subcellular location is the cytoplasm. The protein localises to the nucleus. It localises to the nucleolus. In terms of biological role, may play a role in a ERBB3-regulated signal transduction pathway. Seems be involved in growth regulation. Acts a corepressor of the androgen receptor (AR) and is regulated by the ERBB3 ligand neuregulin-1/heregulin (HRG). Inhibits transcription of some E2F1-regulated promoters, probably by recruiting histone acetylase (HAT) activity. Binds RNA. Associates with 28S, 18S and 5.8S mature rRNAs, several rRNA precursors and probably U3 small nucleolar RNA. May be involved in regulation of intermediate and late steps of rRNA processing. May be involved in ribosome assembly. Mediates cap-independent translation of specific viral IRESs (internal ribosomal entry site). Together with PTBP1 is required for the translation initiation on the foot-and-mouth disease virus (FMDV) IRES. Regulates cell proliferation, differentiation, and survival. Isoform 1 suppresses apoptosis whereas isoform 2 promotes cell differentiation. The polypeptide is Proliferation-associated protein 2G4 (Pa2g4) (Mus musculus (Mouse)).